The sequence spans 351 residues: Ion-translocating oxidoreductase complex subunit D (351 aa).

A run of 4 helical transmembrane segments spans residues 18–38, 40–60, 87–107, and 121–141; these read IMLL…YFFG, GSLI…GAVL, LPPL…IVIA, and PAMV…TSWL. Threonine 185 carries the FMN phosphoryl threonine modification. The next 5 membrane-spanning stretches (helical) occupy residues 211–231, 241–261, 264–284, 298–318, and 320–340; these read VLAG…GLLL, IPVS…MIAP, FASP…FFIA, LIFG…GGYP, and GVAF…HYTQ.

It belongs to the NqrB/RnfD family. In terms of assembly, the complex is composed of six subunits: RnfA, RnfB, RnfC, RnfD, RnfE and RnfG. FMN serves as cofactor.

Its subcellular location is the cell inner membrane. In terms of biological role, part of a membrane-bound complex that couples electron transfer with translocation of ions across the membrane. This Yersinia pseudotuberculosis serotype O:1b (strain IP 31758) protein is Ion-translocating oxidoreductase complex subunit D.